The following is a 1093-amino-acid chain: Leucine-rich repeats and immunoglobulin-like domains protein 1 (1093 aa).

The signal sequence occupies residues 1–34; that stretch reads MARPVRGGLGAPRRSPCLLLLWLLLLRLEPVTAA. Residues 35-68 form the LRRNT domain; that stretch reads AGPRAPCAAACTCAGDSLDCGGRGLAALPGDLPS. Topologically, residues 35-794 are extracellular; the sequence is AGPRAPCAAA…GCRKDGTTVG (760 aa). Residues C45 and C54 are joined by a disulfide bond. LRR repeat units lie at residues 69-90, 93-114, 116-137, 140-161, 164-185, 189-210, 212-233, 236-257, 260-281, 284-305, 308-329, 332-353, 356-378, 383-404, and 407-428; these read WTRSLNLSYNKLSEIDPAGFED, NLQEVYLNNNELTAVPSLGAAS, HVVSLFLQHNKIRSVEGSQLKA, SLEVLDLSLNNITEVRNTCFPH, PIKELNLAGNRIGTLELGAFDG, SLLTLRLSKNRITQLPVRAFKL, RLTQLDLNRNRIRLIEGLTFQG, SLEVLKLQRNNISKLTDGAFWG, KMHVLHLEYNSLVEVNSGSLYG, ALHQLHLSNNSIARIHRKGWSF, KLHELVLSFNNLTRLDEESLAE, SLSVLRLSHNSISHIAEGAFKG, SLRVLDLDHNEISGTIEDTSGAF, SLSKLTLFGNKIKSVAKRAFSG, and GLEHLNLGGNAIRSVQFDAFVK. The N-linked (GlcNAc...) asparagine glycan is linked to N74. A glycan (N-linked (GlcNAc...) asparagine) is linked at N150. N-linked (GlcNAc...) asparagine glycosylation occurs at N246. Residues N292 and N318 are each glycosylated (N-linked (GlcNAc...) asparagine). Residues 440-491 form the LRRCT domain; that stretch reads DSFLCDCQLKWLPPWLIGRMLQAFVTATCAHPESLKGQSIFSVPPESFVCDD. 4 cysteine pairs are disulfide-bonded: C444–C468, C446–C489, C516–C577, and C620–C672. 3 Ig-like C2-type domains span residues 495–594, 599–688, and 693–779; these read PQII…ARLT, PSFT…ATLT, and PSLV…SQLS. N-linked (GlcNAc...) asparagine glycosylation is present at N684. C714 and C763 are oxidised to a cystine. The helical transmembrane segment at 795-815 threads the bilayer; sequence IFTIAVVSSIVLTSLVWVCII. Residues 816 to 1093 are Cytoplasmic-facing; sequence YQTRKKSEEY…RVPLLLAPKS (278 aa). Disordered regions lie at residues 946-983 and 1063-1093; these read AFHPQPVSRDSAQPSAPNGPEPGGSDQEHSPHHQCSRT and PKACDASPESTPLTGQLPGKQRVPLLLAPKS.

As to quaternary structure, interacts (via extracellular LRR and Ig-like domains) with EGFR/ERBB1, ERBB2, ERBB3 and ERBB4 (via extracellular domain). The physiological relevance of the interaction is controversial; LRIG1 may have low affinity for EGFR, and interaction may occur only when high levels of both proteins are present. As to expression, widely expressed.

Its subcellular location is the cell membrane. In terms of biological role, acts as a feedback negative regulator of signaling by receptor tyrosine kinases, through a mechanism that involves enhancement of receptor ubiquitination and accelerated intracellular degradation. The polypeptide is Leucine-rich repeats and immunoglobulin-like domains protein 1 (Homo sapiens (Human)).